The following is a 453-amino-acid chain: tRNA modification GTPase MnmE (453 aa).

Residues Arg22, Glu79, and Lys119 each coordinate (6S)-5-formyl-5,6,7,8-tetrahydrofolate. A TrmE-type G domain is found at 215-376 (GMKVVIAGRP…LKQHLKSLMG (162 aa)). Asn225 is a binding site for K(+). Residues 225-230 (NAGKSS), 244-250 (TEIAGTT), 269-272 (DTAG), and 334-337 (NKAD) each bind GTP. Ser229 serves as a coordination point for Mg(2+). Residues Thr244, Ile246, and Thr249 each contribute to the K(+) site. Residue Thr250 coordinates Mg(2+). Residue Lys453 participates in (6S)-5-formyl-5,6,7,8-tetrahydrofolate binding.

This sequence belongs to the TRAFAC class TrmE-Era-EngA-EngB-Septin-like GTPase superfamily. TrmE GTPase family. Homodimer. Heterotetramer of two MnmE and two MnmG subunits. The cofactor is K(+).

The protein resides in the cytoplasm. Its function is as follows. Exhibits a very high intrinsic GTPase hydrolysis rate. Involved in the addition of a carboxymethylaminomethyl (cmnm) group at the wobble position (U34) of certain tRNAs, forming tRNA-cmnm(5)s(2)U34. The chain is tRNA modification GTPase MnmE from Shewanella sp. (strain MR-7).